The chain runs to 404 residues: ATP phosphoribosyltransferase regulatory subunit (404 aa).

The protein belongs to the class-II aminoacyl-tRNA synthetase family. HisZ subfamily. In terms of assembly, heteromultimer composed of HisG and HisZ subunits.

Its subcellular location is the cytoplasm. It functions in the pathway amino-acid biosynthesis; L-histidine biosynthesis; L-histidine from 5-phospho-alpha-D-ribose 1-diphosphate: step 1/9. Functionally, required for the first step of histidine biosynthesis. May allow the feedback regulation of ATP phosphoribosyltransferase activity by histidine. This is ATP phosphoribosyltransferase regulatory subunit from Picosynechococcus sp. (strain ATCC 27264 / PCC 7002 / PR-6) (Agmenellum quadruplicatum).